Reading from the N-terminus, the 325-residue chain is GMP reductase (325 aa).

Cysteine 174 serves as the catalytic Thioimidate intermediate. 203-226 contacts NADP(+); sequence LIADGGIRTHGDIAKSIRFGASMV.

The protein belongs to the IMPDH/GMPR family. GuaC type 2 subfamily.

The catalysed reaction is IMP + NH4(+) + NADP(+) = GMP + NADPH + 2 H(+). In terms of biological role, catalyzes the irreversible NADPH-dependent deamination of GMP to IMP. It functions in the conversion of nucleobase, nucleoside and nucleotide derivatives of G to A nucleotides, and in maintaining the intracellular balance of A and G nucleotides. In Staphylococcus aureus (strain NCTC 8325 / PS 47), this protein is GMP reductase.